A 198-amino-acid polypeptide reads, in one-letter code: ATP-dependent Clp protease proteolytic subunit 1 (198 aa).

S96 (nucleophile) is an active-site residue. H121 is an active-site residue.

Belongs to the peptidase S14 family. In terms of assembly, fourteen ClpP subunits assemble into 2 heptameric rings which stack back to back to give a disk-like structure with a central cavity, resembling the structure of eukaryotic proteasomes.

It is found in the cytoplasm. The enzyme catalyses Hydrolysis of proteins to small peptides in the presence of ATP and magnesium. alpha-casein is the usual test substrate. In the absence of ATP, only oligopeptides shorter than five residues are hydrolyzed (such as succinyl-Leu-Tyr-|-NHMec, and Leu-Tyr-Leu-|-Tyr-Trp, in which cleavage of the -Tyr-|-Leu- and -Tyr-|-Trp bonds also occurs).. Cleaves peptides in various proteins in a process that requires ATP hydrolysis. Has a chymotrypsin-like activity. Plays a major role in the degradation of misfolded proteins. The polypeptide is ATP-dependent Clp protease proteolytic subunit 1 (Synechocystis sp. (strain ATCC 27184 / PCC 6803 / Kazusa)).